A 155-amino-acid chain; its full sequence is Ribonuclease H (155 aa).

Positions 4 to 145 constitute an RNase H type-1 domain; that stretch reads NISKVVIYTD…ADKLAAQGRQ (142 aa). Residues D13, E51, D73, and D137 each coordinate Mg(2+).

The protein belongs to the RNase H family. As to quaternary structure, monomer. Requires Mg(2+) as cofactor.

The protein localises to the cytoplasm. The enzyme catalyses Endonucleolytic cleavage to 5'-phosphomonoester.. Endonuclease that specifically degrades the RNA of RNA-DNA hybrids. This Rickettsia canadensis (strain McKiel) protein is Ribonuclease H.